We begin with the raw amino-acid sequence, 147 residues long: Hemoglobin subunit beta (147 aa).

Residue Val-2 is modified to N-acetylvaline. In terms of domain architecture, Globin spans 3–147 (HLADDEKAAV…VSTALAHKYH (145 aa)). Position 45 is a phosphoserine (Ser-45). Position 60 is an N6-acetyllysine (Lys-60). His-64 is a binding site for heme b. Lys-83 carries the post-translational modification N6-acetyllysine. Heme b is bound at residue His-93. Cys-94 is subject to S-nitrosocysteine. N6-acetyllysine is present on Lys-145.

The protein belongs to the globin family. In terms of assembly, heterotetramer of two alpha chains and two beta chains. In terms of tissue distribution, red blood cells.

Functionally, involved in oxygen transport from the lung to the various peripheral tissues. This is Hemoglobin subunit beta (HBB) from Bradypus tridactylus (Pale-throated three-toed sloth).